The following is a 333-amino-acid chain: DNA-directed RNA polymerase subunit alpha (333 aa).

The segment at 1–239 (MSAVLDKGSL…TQARCFLNIA (239 aa)) is alpha N-terminal domain (alpha-NTD). Positions 259-333 (DASDLLSARI…SLGMNLDSHG (75 aa)) are alpha C-terminal domain (alpha-CTD).

Belongs to the RNA polymerase alpha chain family. Homodimer. The RNAP catalytic core consists of 2 alpha, 1 beta, 1 beta' and 1 omega subunit. When a sigma factor is associated with the core the holoenzyme is formed, which can initiate transcription.

It catalyses the reaction RNA(n) + a ribonucleoside 5'-triphosphate = RNA(n+1) + diphosphate. Its function is as follows. DNA-dependent RNA polymerase catalyzes the transcription of DNA into RNA using the four ribonucleoside triphosphates as substrates. The protein is DNA-directed RNA polymerase subunit alpha of Neorickettsia sennetsu (strain ATCC VR-367 / Miyayama) (Ehrlichia sennetsu).